The following is a 172-amino-acid chain: Myosin regulatory light chain 12B (172 aa).

The span at 1 to 16 (MSSKKAKTKTTKKRPQ) shows a compositional bias: basic residues. Residues 1-20 (MSSKKAKTKTTKKRPQRATS) are disordered. The residue at position 19 (T19) is a Phosphothreonine; by MLCK and ZIPK/DAPK3. S20 is subject to Phosphoserine; by MLCK and ZIPK/DAPK3. EF-hand domains are found at residues 29 to 64 (SQIQ…LGKN), 98 to 133 (DPED…MGDR), and 134 to 169 (FTDE…GAKD). The Ca(2+) site is built by D42, N44, D46, and D53.

As to quaternary structure, myosin is a hexamer of 2 heavy chains and 4 light chains: interacts with myosin heavy chain MYO19. Post-translationally, phosphorylation increases the actin-activated myosin ATPase activity and thereby regulates the contractile activity. It is required to generate the driving force in the migration of the cells but not necessary for localization of myosin-2 at the leading edge. Phosphorylation is reduced following epigallocatechin-3-O-gallate treatment. As to expression, ubiquitously expressed in various hematopoietic cells.

Myosin regulatory subunit that plays an important role in regulation of both smooth muscle and nonmuscle cell contractile activity via its phosphorylation. Phosphorylation triggers actin polymerization in vascular smooth muscle. Implicated in cytokinesis, receptor capping, and cell locomotion. The protein is Myosin regulatory light chain 12B (MYL12B) of Homo sapiens (Human).